The primary structure comprises 442 residues: Circumsporozoite protein (442 aa).

The signal sequence occupies residues 1-18 (MMRKLAILSVSSFLFVEA). The tract at residues 69-357 (SRSLGENDDG…VKNNNNEEPS (289 aa)) is disordered. The segment covering 81-94 (DNGNNNNGNNNNGD) has biased composition (low complexity). Basic and acidic residues predominate over residues 95–115 (NGREGKDEDKRDGNNEDNEKL). Residues 114-121 (KLRKPKHK) are required for the binding to heparan sulfate proteoglycans (HSPGs) on the surface of host hepatocytes. The tract at residues 122–126 (KLKQP) is region I; contains the proteolytic cleavage site. Over residues 130–318 (NPDPNANPNV…PNANPNANPN (189 aa)) the composition is skewed to low complexity. Tandem repeats lie at residues 134–137 (NANP), 138–141 (NVDP), 142–145 (NANP), 146–149 (NVDP), 150–153 (NANP), 154–157 (NANP), 158–161 (NANP), 162–165 (NANP), 166–169 (NANP), 170–173 (NANP), 174–177 (NANP), 178–181 (NANP), 182–185 (NANP), 186–189 (NANP), 190–193 (NANP), 194–197 (NANP), 198–201 (NANP), 202–205 (NANP), 206–209 (NANP), 210–213 (NVDP), 214–217 (NANP), 218–221 (NANP), 222–225 (NANP), 226–229 (NANP), 230–233 (NANP), 234–237 (NANP), 238–241 (NANP), 242–245 (NANP), 246–249 (NANP), 250–253 (NANP), 254–257 (NANP), 258–261 (NANP), 262–265 (NANP), 266–269 (NANP), 270–273 (NANP), 274–277 (NANP), 278–281 (NANP), 282–285 (NANP), 286–289 (NANP), 290–293 (NANP), 294–297 (NANP), 298–301 (NANP), 302–305 (NANP), 306–309 (NANP), 310–313 (NANP), and 314–317 (NANP). Residues 134–317 (NANPNVDPNA…NPNANPNANP (184 aa)) are 46 X 4 AA tandem repeats of N-[AV]-[ND]-P. A compositionally biased stretch (polar residues) spans 319-334 (KNNQGNGQGHNMPNDP). Positions 340–354 (ENANANNAVKNNNNE) are enriched in low complexity. The 54-residue stretch at 367-420 (KIQNSLSTEWSPCSVTCGNGIQVRIKPGSADKPKDQLDYENDIEKKICKMEKCS) folds into the TSP type-1 domain. 2 disulfide bridges follow: Cys379–Cys414 and Cys383–Cys419. O-linked (Fuc) threonine glycosylation is present at Thr382. Cys419 carries GPI-anchor amidated cysteine lipidation. The propeptide at 420-442 (SSVFNVVNSSIGLIMVLSFLFLN) is removed in mature form.

It belongs to the plasmodium circumsporozoite protein family. In terms of processing, during host cell invasion, proteolytically cleaved at the cell membrane in the region I by a papain-like cysteine protease of parasite origin. Cleavage is triggered by the sporozoite contact with highly sulfated heparan sulfate proteoglycans (HSPGs) present on the host hepatocyte cell surface. Cleavage exposes the TSP type-1 (TSR) domain and is required for productive invasion of host hepatocytes but not for adhesion to the host cell membrane. Cleavage is dispensable for sporozoite development in the oocyst, motility and for traversal of host and vector cells. Post-translationally, O-glycosylated; maybe by POFUT2.

The protein localises to the cell membrane. It is found in the cytoplasm. Its function is as follows. Essential sporozoite protein. In the mosquito vector, required for sporozoite development in the oocyst, migration through the vector hemolymph and entry into the vector salivary glands. In the vertebrate host, required for sporozoite migration through the host dermis and infection of host hepatocytes. Binds to highly sulfated heparan sulfate proteoglycans (HSPGs) on the surface of host hepatocytes. In terms of biological role, in the vertebrate host, binds to highly sulfated heparan sulfate proteoglycans (HSPGs) on the surface of host hepatocytes and is required for sporozoite invasion of the host hepatocytes. The polypeptide is Circumsporozoite protein (Plasmodium falciparum (isolate Wellcome)).